The sequence spans 101 residues: Large ribosomal subunit protein uL24 (101 aa).

The protein belongs to the universal ribosomal protein uL24 family. As to quaternary structure, part of the 50S ribosomal subunit.

Functionally, one of two assembly initiator proteins, it binds directly to the 5'-end of the 23S rRNA, where it nucleates assembly of the 50S subunit. In terms of biological role, one of the proteins that surrounds the polypeptide exit tunnel on the outside of the subunit. This is Large ribosomal subunit protein uL24 from Streptococcus pneumoniae (strain ATCC 700669 / Spain 23F-1).